We begin with the raw amino-acid sequence, 189 residues long: Phosphoheptose isomerase (189 aa).

The SIS domain maps to 34–189; that stretch reads AVETLKNGNK…CQIIDNELSH (156 aa). Position 49–51 (49–51) interacts with substrate; it reads NGG. Residues histidine 58 and glutamate 62 each contribute to the Zn(2+) site. Substrate-binding positions include glutamate 62, 91 to 92, 117 to 119, serine 122, and glutamine 169; these read ND and STS. Zn(2+)-binding residues include glutamine 169 and histidine 177.

It belongs to the SIS family. GmhA subfamily. In terms of assembly, homotetramer. Requires Zn(2+) as cofactor.

It localises to the cytoplasm. The catalysed reaction is 2 D-sedoheptulose 7-phosphate = D-glycero-alpha-D-manno-heptose 7-phosphate + D-glycero-beta-D-manno-heptose 7-phosphate. Its pathway is carbohydrate biosynthesis; D-glycero-D-manno-heptose 7-phosphate biosynthesis; D-glycero-alpha-D-manno-heptose 7-phosphate and D-glycero-beta-D-manno-heptose 7-phosphate from sedoheptulose 7-phosphate: step 1/1. Catalyzes the isomerization of sedoheptulose 7-phosphate in D-glycero-D-manno-heptose 7-phosphate. The polypeptide is Phosphoheptose isomerase (Aliarcobacter butzleri (strain RM4018) (Arcobacter butzleri)).